The following is a 399-amino-acid chain: Elongation factor Tu 1 (399 aa).

The tr-type G domain maps to 10 to 209; sequence KPHVNIGTIG…QVDTYIPEPE (200 aa). Positions 19 to 26 are G1; that stretch reads GHVDHGKT. 19 to 26 is a binding site for GTP; it reads GHVDHGKT. T26 contacts Mg(2+). The G2 stretch occupies residues 60–64; it reads GITIA. The G3 stretch occupies residues 81-84; it reads DCPG. GTP is bound by residues 81–85 and 136–139; these read DCPGH and NKAD. The G4 stretch occupies residues 136–139; sequence NKAD. The G5 stretch occupies residues 174-176; it reads SAL.

This sequence belongs to the TRAFAC class translation factor GTPase superfamily. Classic translation factor GTPase family. EF-Tu/EF-1A subfamily. In terms of assembly, monomer.

It localises to the cytoplasm. It catalyses the reaction GTP + H2O = GDP + phosphate + H(+). GTP hydrolase that promotes the GTP-dependent binding of aminoacyl-tRNA to the A-site of ribosomes during protein biosynthesis. The chain is Elongation factor Tu 1 from Syntrophotalea carbinolica (strain DSM 2380 / NBRC 103641 / GraBd1) (Pelobacter carbinolicus).